A 373-amino-acid chain; its full sequence is Chaperone protein DnaJ (373 aa).

Positions 5-70 (DYYEVLGLQK…EKKSNYDQFG (66 aa)) constitute a J domain. The segment at 132 to 214 (GVEKEITVNR…CRGNGNVRKT (83 aa)) adopts a CR-type zinc-finger fold. Residues Cys145, Cys148, Cys162, Cys165, Cys188, Cys191, Cys202, and Cys205 each contribute to the Zn(2+) site. CXXCXGXG motif repeat units follow at residues 145–152 (CEHCNGSG), 162–169 (CPTCSGTG), 188–195 (CDRCSGTG), and 202–209 (CTHCRGNG).

This sequence belongs to the DnaJ family. As to quaternary structure, homodimer. Zn(2+) is required as a cofactor.

It localises to the cytoplasm. In terms of biological role, participates actively in the response to hyperosmotic and heat shock by preventing the aggregation of stress-denatured proteins and by disaggregating proteins, also in an autonomous, DnaK-independent fashion. Unfolded proteins bind initially to DnaJ; upon interaction with the DnaJ-bound protein, DnaK hydrolyzes its bound ATP, resulting in the formation of a stable complex. GrpE releases ADP from DnaK; ATP binding to DnaK triggers the release of the substrate protein, thus completing the reaction cycle. Several rounds of ATP-dependent interactions between DnaJ, DnaK and GrpE are required for fully efficient folding. Also involved, together with DnaK and GrpE, in the DNA replication of plasmids through activation of initiation proteins. The protein is Chaperone protein DnaJ of Clostridium botulinum (strain Alaska E43 / Type E3).